The chain runs to 948 residues: RNA polymerase-associated protein RapA (948 aa).

A Helicase ATP-binding domain is found at 164 to 332 (EVADRIAPRV…FARLRLLDPN (169 aa)). 177–184 (DEVGLGKT) is an ATP binding site. Residues 278–281 (DEAH) carry the DEAH box motif. The region spanning 473 to 627 (RVEWLIDQLK…TCPTGNALQH (155 aa)) is the Helicase C-terminal domain.

The protein belongs to the SNF2/RAD54 helicase family. RapA subfamily. In terms of assembly, interacts with the RNAP. Has a higher affinity for the core RNAP than for the holoenzyme. Its ATPase activity is stimulated by binding to RNAP.

Functionally, transcription regulator that activates transcription by stimulating RNA polymerase (RNAP) recycling in case of stress conditions such as supercoiled DNA or high salt concentrations. Probably acts by releasing the RNAP, when it is trapped or immobilized on tightly supercoiled DNA. Does not activate transcription on linear DNA. Probably not involved in DNA repair. This Pseudomonas fluorescens (strain SBW25) protein is RNA polymerase-associated protein RapA.